Here is a 216-residue protein sequence, read N- to C-terminus: RNA chaperone ProQ (216 aa).

The segment covering 105–115 (ESKAKVAEKRK) has biased composition (basic and acidic residues). The interval 105 to 159 (ESKAKVAEKRKAQNAAKPGAKKSYKSKTVPAFKSSPKGTNQDNVKPKAKLPPPEK) is disordered.

Belongs to the ProQ family.

Its subcellular location is the cytoplasm. Functionally, RNA chaperone with significant RNA binding, RNA strand exchange and RNA duplexing activities. This is RNA chaperone ProQ from Pseudoalteromonas atlantica (strain T6c / ATCC BAA-1087).